The sequence spans 332 residues: Protein pelota homolog (332 aa).

It belongs to the eukaryotic release factor 1 family. Pelota subfamily. As to quaternary structure, monomer. A divalent metal cation is required as a cofactor.

It is found in the cytoplasm. Functionally, may function in recognizing stalled ribosomes, interact with stem-loop structures in stalled mRNA molecules, and effect endonucleolytic cleavage of the mRNA. May play a role in the release non-functional ribosomes and degradation of damaged mRNAs. Has endoribonuclease activity. In Pyrobaculum calidifontis (strain DSM 21063 / JCM 11548 / VA1), this protein is Protein pelota homolog.